Reading from the N-terminus, the 450-residue chain is MPDVPETVGTPDGSTEFEHRPTTDQSFENALAKARNGTRLTVDDAVELFTTGTDRDGIDHDRKEQVLEAADRRRAEVVGDEVTFVANLNNNVTTACNTGCLFCNFKDRSEQFRSDYQEDHGGFTKTPSESRQIVQDALDRGIYEVCSVSGLHPALALDTEHREILETSDRGDLNYRSPDEYETDPATYCEQLDAMNVGDIHLHSMTPEEAYHARRGTDWSYEEVFSRLQDAGLDSVPGTAAEILVDEVRDVICPGKIRTDEWLEAMAAAASVGLDMTSTMMYGHVENEYHRALHLQRIRDLQDRTGAITEFVPLSFVHEETPLYERGMVDGGATVDEDELMIAVSRLFLDNVDHIQASWVKYGDTQGLKMLTCGADDFMGTILSEEITKRAGGDYGEFRSFQEYADMITAIGRTPVERSTDYEQRRVIDPDADVLGPQLGPRADGTPLLD.

Residues 1-24 are disordered; that stretch reads MPDVPETVGTPDGSTEFEHRPTTD. Residues 82 to 350 enclose the Radical SAM core domain; the sequence is VTFVANLNNN…MIAVSRLFLD (269 aa). The [4Fe-4S] cluster site is built by Cys-96, Cys-100, and Cys-103. The interval 430–450 is disordered; that stretch reads PDADVLGPQLGPRADGTPLLD.

This sequence belongs to the radical SAM superfamily. CofH family. As to quaternary structure, consists of two subunits, CofG and CofH. [4Fe-4S] cluster is required as a cofactor.

The enzyme catalyses 5-amino-6-(D-ribitylamino)uracil + L-tyrosine + S-adenosyl-L-methionine = 5-amino-5-(4-hydroxybenzyl)-6-(D-ribitylimino)-5,6-dihydrouracil + 2-iminoacetate + 5'-deoxyadenosine + L-methionine + H(+). It functions in the pathway cofactor biosynthesis; coenzyme F0 biosynthesis. In terms of biological role, catalyzes the radical-mediated synthesis of 5-amino-5-(4-hydroxybenzyl)-6-(D-ribitylimino)-5,6-dihydrouracil from 5-amino-6-(D-ribitylamino)uracil and L-tyrosine. This Haloarcula marismortui (strain ATCC 43049 / DSM 3752 / JCM 8966 / VKM B-1809) (Halobacterium marismortui) protein is 5-amino-6-(D-ribitylamino)uracil--L-tyrosine 4-hydroxyphenyl transferase.